Here is a 709-residue protein sequence, read N- to C-terminus: Protein IMPAIRED IN BABA-INDUCED STERILITY 1 (709 aa).

G2 carries the N-myristoyl glycine lipid modification. The interval 53-80 (SGKKSSSKKSGSELGSDFGELSESGRAS) is disordered. In terms of domain architecture, Protein kinase spans 131–418 (FEKLEKIGQG…ASTALVSQYF (288 aa)). Residues 137–145 (IGQGTYSSV) and K160 contribute to the ATP site. D255 functions as the Proton acceptor in the catalytic mechanism. Disordered stretches follow at residues 434-536 (SPSK…PFSG) and 566-609 (SRGH…QDRE). Residues 437-449 (KEIDAKHREDTTR) show a composition bias toward basic and acidic residues. Over residues 484–494 (HSQKFQKRNGH) the composition is skewed to basic residues. A compositionally biased stretch (polar residues) spans 495–505 (SVHNSIDSDST). Basic and acidic residues-rich tracts occupy residues 509-523 (KMQK…EASH) and 586-609 (VDSK…QDRE).

The protein belongs to the protein kinase superfamily. Ser/Thr protein kinase family.

In terms of biological role, required for beta-aminobutyric acid (BABA)-induced resistance (BABA-IR) against bacteria (e.g. P.syringae) and oomycetes (e.g. H.parasitica) via priming for salicylate (SA)-dependent defense responses such as pathogenesis-related PR-1 gene expression and trailing necrosis. Involved in BABA-mediated sterility. Necessary for the inheritance of BABA-priming to next generation, especially for the primed to be primed phenotype which consists in an enhanced second BABA-priming in transgenerationally primed plants. This is Protein IMPAIRED IN BABA-INDUCED STERILITY 1 from Arabidopsis thaliana (Mouse-ear cress).